The following is a 298-amino-acid chain: Urease accessory protein UreD 3 (298 aa).

A disordered region spans residues 1-30 (MADEAGTRSAGGRPIPAAEPLRPALSRQRS).

This sequence belongs to the UreD family. In terms of assembly, ureD, UreF and UreG form a complex that acts as a GTP-hydrolysis-dependent molecular chaperone, activating the urease apoprotein by helping to assemble the nickel containing metallocenter of UreC. The UreE protein probably delivers the nickel.

It is found in the cytoplasm. Its function is as follows. Required for maturation of urease via the functional incorporation of the urease nickel metallocenter. The protein is Urease accessory protein UreD 3 of Methylorubrum extorquens (strain PA1) (Methylobacterium extorquens).